Consider the following 523-residue polypeptide: Magnesium/proton exchanger 1 (523 aa).

11 helical membrane-spanning segments follow: residues 24-44, 88-108, 125-145, 157-177, 185-205, 325-345, 349-369, 377-397, 428-448, 461-481, and 495-515; these read LLPIGVRAFIYTAVLAYCFIG, IADVALLAFGTSFPQISLATI, GTLVGSAAFDLFPIHAVCVVM, LGVWLVELFWSFWAYIWLYII, VITLWEALLTVLQYGLLLLHA, VIGISWNLIIAPWKMLFAFVP, IAHGWIAFICSLIFISGIAYG, ISCVTGVSPYVIAFTALAAGT, VNIYVGIGVPWLVDTMYNYFV, LSFSLLVFFATSFGCITVLVL, and MWAWATSVYFMILWVVFVVLS.

The protein belongs to the Ca(2+):cation antiporter (CaCA) (TC 2.A.19) family. MHX subfamily.

It localises to the vacuole membrane. Vacuolar transporter that exchanges protons with Mg(2+), Zn(2+) and Fe(2+) ions. May control the partitioning of Mg(2+) and Zn(2+) between plant organs. The chain is Magnesium/proton exchanger 1 (MHX1) from Oryza sativa subsp. japonica (Rice).